Consider the following 752-residue polypeptide: Putative xanthine dehydrogenase molybdenum-binding subunit XdhA (752 aa).

Mo-molybdopterin-binding residues include Gln206, Phe237, Arg350, and Ala516.

It belongs to the xanthine dehydrogenase family. As to quaternary structure, heterotrimer of XdhA, XdhB and XdhC. Mo-molybdopterin is required as a cofactor.

It catalyses the reaction xanthine + NAD(+) + H2O = urate + NADH + H(+). The enzyme catalyses hypoxanthine + NAD(+) + H2O = xanthine + NADH + H(+). It participates in purine metabolism; hypoxanthine degradation; urate from hypoxanthine: step 1/2. The protein operates within purine metabolism; hypoxanthine degradation; urate from hypoxanthine: step 2/2. Presumed to be a dehydrogenase, but possibly an oxidase. Participates in limited purine salvage (requires aspartate) but does not support aerobic growth on purines as the sole carbon source (purine catabolism). Deletion results in increased adenine sensitivity, suggesting that this protein contributes to the conversion of adenine to guanine nucleotides during purine salvage. The polypeptide is Putative xanthine dehydrogenase molybdenum-binding subunit XdhA (xdhA) (Escherichia coli (strain K12)).